The primary structure comprises 602 residues: T-box transcription factor TBX15 (602 aa).

The tract at residues Ala-46–Arg-84 is disordered. Over residues Glu-71–Arg-84 the composition is skewed to polar residues. Residues Leu-122 to Asp-304 constitute a DNA-binding region (T-box). Residue Thr-330 is modified to Phosphothreonine. 2 disordered regions span residues Gln-338–Ser-369 and Gln-425–Ile-447. Low complexity predominate over residues Gly-346–Ser-369. The segment covering Gln-425 to Leu-446 has biased composition (polar residues).

Can form a heterodimer with TBX18.

It localises to the nucleus. Its function is as follows. Probable transcriptional regulator involved in the development of the skeleton of the limb, vertebral column and head. Acts by controlling the number of mesenchymal precursor cells and chondrocytes. The sequence is that of T-box transcription factor TBX15 (TBX15) from Homo sapiens (Human).